A 351-amino-acid chain; its full sequence is Uroporphyrinogen decarboxylase (351 aa).

Substrate-binding positions include 25-29, D74, Y151, S206, and H325; that span reads RQAGR.

It belongs to the uroporphyrinogen decarboxylase family. Homodimer.

It is found in the cytoplasm. It catalyses the reaction uroporphyrinogen III + 4 H(+) = coproporphyrinogen III + 4 CO2. Its pathway is porphyrin-containing compound metabolism; protoporphyrin-IX biosynthesis; coproporphyrinogen-III from 5-aminolevulinate: step 4/4. Functionally, catalyzes the decarboxylation of four acetate groups of uroporphyrinogen-III to yield coproporphyrinogen-III. This chain is Uroporphyrinogen decarboxylase, found in Chlorobium phaeobacteroides (strain DSM 266 / SMG 266 / 2430).